Reading from the N-terminus, the 314-residue chain is Putative S-adenosyl-L-methionine-dependent methyltransferase MAB_3886c (314 aa).

S-adenosyl-L-methionine is bound by residues Asp133 and 162–163 (DL).

This sequence belongs to the UPF0677 family.

In terms of biological role, exhibits S-adenosyl-L-methionine-dependent methyltransferase activity. This Mycobacteroides abscessus (strain ATCC 19977 / DSM 44196 / CCUG 20993 / CIP 104536 / JCM 13569 / NCTC 13031 / TMC 1543 / L948) (Mycobacterium abscessus) protein is Putative S-adenosyl-L-methionine-dependent methyltransferase MAB_3886c.